The chain runs to 163 residues: Nucleotide-binding protein LBJ_2391 (163 aa).

This sequence belongs to the YajQ family.

Nucleotide-binding protein. This is Nucleotide-binding protein LBJ_2391 from Leptospira borgpetersenii serovar Hardjo-bovis (strain JB197).